A 148-amino-acid chain; its full sequence is Truncated transcription factor CAULIFLOWER D (148 aa).

The 61-residue stretch at 1-61 (MGRGRVEMKR…GKLFEYSSES (61 aa)) folds into the MADS-box domain. One can recognise a K-box; partial domain in the interval 90–148 (QTNWSMEYSRLKAKIELWERNQRHYLGEDLESISIKELQNLEQQLDTSLKHIRSRKVCK).

Homodimer capable of binding to CArG-box sequences.

Its subcellular location is the nucleus. Functionally, probable transcription factor that promotes early floral meristem identity in synergy with APETALA1, FRUITFULL and LEAFY. Is required subsequently for the transition of an inflorescence meristem into a floral meristem. Seems to be partially redundant to the function of APETALA1. This is Truncated transcription factor CAULIFLOWER D (CAL-D) from Brassica oleracea var. botrytis (Cauliflower).